Reading from the N-terminus, the 325-residue chain is MATH domain and coiled-coil domain-containing protein At3g58340 (325 aa).

The region spanning 6 to 131 (DKKFCWEIKN…NGQVMIVAEV (126 aa)) is the MATH domain. The stretch at 266–315 (KVDWLEKKLDHVKEKKEKEQSGLIILQGIEQQLHELMHKCEKKKSEVLSV) forms a coiled coil.

The polypeptide is MATH domain and coiled-coil domain-containing protein At3g58340 (Arabidopsis thaliana (Mouse-ear cress)).